Here is a 387-residue protein sequence, read N- to C-terminus: Zinc finger protein neuro-d4 (387 aa).

Residues Lys-106, Lys-129, and Lys-133 each participate in a glycyl lysine isopeptide (Lys-Gly) (interchain with G-Cter in SUMO2) cross-link. The segment at 195–218 adopts a C2H2-type zinc-finger fold; sequence YVCDICGKRYKNRPGLSYHYTHTH. 2 PHD-type zinc fingers span residues 271 to 328 and 325 to 375; these read NGYC…CKSC and CKSC…CLRH. Cys-274, Cys-277, Cys-293, Cys-296, His-301, Cys-304, Cys-322, Cys-325, Cys-328, Cys-331, Cys-343, Cys-346, His-351, Cys-354, Cys-369, and Cys-372 together coordinate Zn(2+).

The protein belongs to the requiem/DPF family. As to quaternary structure, component of neuron-specific chromatin remodeling complex (nBAF complex) composed of at least, ARID1A/BAF250A or ARID1B/BAF250B, SMARCD1/BAF60A, SMARCD3/BAF60C, SMARCA2/BRM/BAF190B, SMARCA4/BRG1/BAF190A, SMARCB1/BAF47, SMARCC1/BAF155, SMARCE1/BAF57, SMARCC2/BAF170, DPF1/BAF45B, DPF3/BAF45C, ACTL6B/BAF53B and actin. As to expression, at embryonic stages, predominant expression in the nervous system. Expressed specifically in postmitotic neurons (at protein level).

It localises to the cytoplasm. The protein localises to the nucleus. Its function is as follows. May have an important role in developing neurons by participating in regulation of cell survival, possibly as a neurospecific transcription factor. Belongs to the neuron-specific chromatin remodeling complex (nBAF complex). During neural development a switch from a stem/progenitor to a postmitotic chromatin remodeling mechanism occurs as neurons exit the cell cycle and become committed to their adult state. The transition from proliferating neural stem/progenitor cells to postmitotic neurons requires a switch in subunit composition of the npBAF and nBAF complexes. As neural progenitors exit mitosis and differentiate into neurons, npBAF complexes which contain ACTL6A/BAF53A and PHF10/BAF45A, are exchanged for homologous alternative ACTL6B/BAF53B and DPF1/BAF45B or DPF3/BAF45C subunits in neuron-specific complexes (nBAF). The npBAF complex is essential for the self-renewal/proliferative capacity of the multipotent neural stem cells. The nBAF complex along with CREST plays a role regulating the activity of genes essential for dendrite growth. The protein is Zinc finger protein neuro-d4 of Mus musculus (Mouse).